The primary structure comprises 601 residues: Glutamyl-tRNA(Gln) amidotransferase subunit B, mitochondrial (601 aa).

The N-terminal 52 residues, 1-52 (MLQQWLRQSPRAARVLRGSCCRGPQSGSLRHSPLPTAPHRCIRSLQTSATES), are a transit peptide targeting the mitochondrion.

It belongs to the GatB/GatE family. GatB subfamily. As to quaternary structure, subunit of the heterotrimeric GatCAB amidotransferase (AdT) complex, composed of A, B and C subunits.

It localises to the mitochondrion. The catalysed reaction is L-glutamyl-tRNA(Gln) + L-glutamine + ATP + H2O = L-glutaminyl-tRNA(Gln) + L-glutamate + ADP + phosphate + H(+). In terms of biological role, allows the formation of correctly charged Gln-tRNA(Gln) through the transamidation of misacylated Glu-tRNA(Gln) in the mitochondria. The reaction takes place in the presence of glutamine and ATP through an activated gamma-phospho-Glu-tRNA(Gln). This chain is Glutamyl-tRNA(Gln) amidotransferase subunit B, mitochondrial, found in Aspergillus fumigatus (strain ATCC MYA-4609 / CBS 101355 / FGSC A1100 / Af293) (Neosartorya fumigata).